The sequence spans 561 residues: Urocanate hydratase (561 aa).

Residues 52 to 53, Gln-130, 176 to 178, Glu-196, Arg-201, 242 to 243, 263 to 267, 273 to 274, and Tyr-322 each bind NAD(+); these read GG, GMG, NA, QTSAH, and YL. Residue Cys-410 is part of the active site. NAD(+) is bound at residue Gly-492.

It belongs to the urocanase family. It depends on NAD(+) as a cofactor.

It localises to the cytoplasm. The catalysed reaction is 4-imidazolone-5-propanoate = trans-urocanate + H2O. It participates in amino-acid degradation; L-histidine degradation into L-glutamate; N-formimidoyl-L-glutamate from L-histidine: step 2/3. Functionally, catalyzes the conversion of urocanate to 4-imidazolone-5-propionate. The protein is Urocanate hydratase of Salmonella newport (strain SL254).